The sequence spans 243 residues: Ubiquinone/menaquinone biosynthesis C-methyltransferase UbiE (243 aa).

S-adenosyl-L-methionine-binding positions include T69, D90, and 116-117 (DA).

Belongs to the class I-like SAM-binding methyltransferase superfamily. MenG/UbiE family.

It carries out the reaction a 2-demethylmenaquinol + S-adenosyl-L-methionine = a menaquinol + S-adenosyl-L-homocysteine + H(+). It catalyses the reaction a 2-methoxy-6-(all-trans-polyprenyl)benzene-1,4-diol + S-adenosyl-L-methionine = a 5-methoxy-2-methyl-3-(all-trans-polyprenyl)benzene-1,4-diol + S-adenosyl-L-homocysteine + H(+). The protein operates within quinol/quinone metabolism; menaquinone biosynthesis; menaquinol from 1,4-dihydroxy-2-naphthoate: step 2/2. It participates in cofactor biosynthesis; ubiquinone biosynthesis. Its function is as follows. Methyltransferase required for the conversion of demethylmenaquinol (DMKH2) to menaquinol (MKH2) and the conversion of 2-polyprenyl-6-methoxy-1,4-benzoquinol (DDMQH2) to 2-polyprenyl-3-methyl-6-methoxy-1,4-benzoquinol (DMQH2). This is Ubiquinone/menaquinone biosynthesis C-methyltransferase UbiE from Cupriavidus metallidurans (strain ATCC 43123 / DSM 2839 / NBRC 102507 / CH34) (Ralstonia metallidurans).